Reading from the N-terminus, the 591-residue chain is Transcription factor COE1-A (591 aa).

Residues 63–66 (RKSN) form an interaction with DNA region. The C5-type zinc finger occupies 151–170 (CRVLLTHEIMCSRCCDKKSC). Interaction with DNA stretches follow at residues 197–204 (NCLKNAGN) and 236–239 (NNSK). The IPT/TIG domain occupies 262-344 (PCIKAISPSE…CKGTPGRFIY (83 aa)). Residues 454 to 466 (ANQGFSRNTSSVS) are compositionally biased toward polar residues. The interval 454-484 (ANQGFSRNTSSVSPHGYVPSTTPQQSSYSTV) is disordered. A compositionally biased stretch (low complexity) spans 471–484 (VPSTTPQQSSYSTV).

It belongs to the COE family. Forms either a homodimer or a heterodimer with a related family member. As to expression, detected in B cells.

The protein resides in the nucleus. In terms of biological role, transcriptional activator. The sequence is that of Transcription factor COE1-A from Danio rerio (Zebrafish).